The sequence spans 68 residues: Large ribosomal subunit protein uL29 (68 aa).

It belongs to the universal ribosomal protein uL29 family.

The polypeptide is Large ribosomal subunit protein uL29 (Streptococcus agalactiae serotype Ia (strain ATCC 27591 / A909 / CDC SS700)).